The chain runs to 436 residues: Serine--tRNA ligase (436 aa).

Residue 242 to 244 (TAE) coordinates L-serine. 273 to 275 (RSE) lines the ATP pocket. Glu296 is a binding site for L-serine. Position 360-363 (360-363 (EISS)) interacts with ATP. Ser395 contributes to the L-serine binding site.

It belongs to the class-II aminoacyl-tRNA synthetase family. Type-1 seryl-tRNA synthetase subfamily. In terms of assembly, homodimer. The tRNA molecule binds across the dimer.

It is found in the cytoplasm. The enzyme catalyses tRNA(Ser) + L-serine + ATP = L-seryl-tRNA(Ser) + AMP + diphosphate + H(+). It carries out the reaction tRNA(Sec) + L-serine + ATP = L-seryl-tRNA(Sec) + AMP + diphosphate + H(+). Its pathway is aminoacyl-tRNA biosynthesis; selenocysteinyl-tRNA(Sec) biosynthesis; L-seryl-tRNA(Sec) from L-serine and tRNA(Sec): step 1/1. In terms of biological role, catalyzes the attachment of serine to tRNA(Ser). Is also able to aminoacylate tRNA(Sec) with serine, to form the misacylated tRNA L-seryl-tRNA(Sec), which will be further converted into selenocysteinyl-tRNA(Sec). This chain is Serine--tRNA ligase, found in Polynucleobacter asymbioticus (strain DSM 18221 / CIP 109841 / QLW-P1DMWA-1) (Polynucleobacter necessarius subsp. asymbioticus).